The chain runs to 221 residues: NEDD8 ultimate buster 1 (221 aa).

3 UBA domains span residues 1-19 (LGLRACDGNVDHAAVHIAN), 30-76 (EERE…LLHN), and 95-135 (SPSQ…LVHN). The disordered stretch occupies residues 136 to 193 (GGRLPPDLQLSAEDSSSTPSTSPSDSAGTSSASTDEDMETEAVNEILEDIPEHEEDYL). The segment covering 146–168 (SAEDSSSTPSTSPSDSAGTSSAS) has biased composition (low complexity). The segment covering 169–193 (TDEDMETEAVNEILEDIPEHEEDYL) has biased composition (acidic residues).

Directly interacts with NEDD8 and PSMD4/S5a, a member of the regulatory subunit of the 26S proteasome. Interacts with AIPL1.

It localises to the nucleus. Its function is as follows. Specific down-regulator of the NEDD8 conjugation system. Recruits NEDD8 and its conjugates to the proteasome for degradation. This is NEDD8 ultimate buster 1 (NUB1) from Bos taurus (Bovine).